Here is a 127-residue protein sequence, read N- to C-terminus: Small ribosomal subunit protein uS12 (127 aa).

Asp-89 bears the 3-methylthioaspartic acid mark.

The protein belongs to the universal ribosomal protein uS12 family. As to quaternary structure, part of the 30S ribosomal subunit. Contacts proteins S8 and S17. May interact with IF1 in the 30S initiation complex.

Functionally, with S4 and S5 plays an important role in translational accuracy. In terms of biological role, interacts with and stabilizes bases of the 16S rRNA that are involved in tRNA selection in the A site and with the mRNA backbone. Located at the interface of the 30S and 50S subunits, it traverses the body of the 30S subunit contacting proteins on the other side and probably holding the rRNA structure together. The combined cluster of proteins S8, S12 and S17 appears to hold together the shoulder and platform of the 30S subunit. This Nautilia profundicola (strain ATCC BAA-1463 / DSM 18972 / AmH) protein is Small ribosomal subunit protein uS12.